A 320-amino-acid chain; its full sequence is o-succinylbenzoate synthase (320 aa).

Catalysis depends on Lys-133, which acts as the Proton donor. Positions 161, 190, and 213 each coordinate Mg(2+). Catalysis depends on Lys-235, which acts as the Proton acceptor.

Belongs to the mandelate racemase/muconate lactonizing enzyme family. MenC type 1 subfamily. Requires a divalent metal cation as cofactor.

It catalyses the reaction (1R,6R)-6-hydroxy-2-succinyl-cyclohexa-2,4-diene-1-carboxylate = 2-succinylbenzoate + H2O. Its pathway is quinol/quinone metabolism; 1,4-dihydroxy-2-naphthoate biosynthesis; 1,4-dihydroxy-2-naphthoate from chorismate: step 4/7. It participates in quinol/quinone metabolism; menaquinone biosynthesis. Functionally, converts 2-succinyl-6-hydroxy-2,4-cyclohexadiene-1-carboxylate (SHCHC) to 2-succinylbenzoate (OSB). The protein is o-succinylbenzoate synthase of Salmonella enteritidis PT4 (strain P125109).